A 222-amino-acid chain; its full sequence is Peptide methionine sulfoxide reductase MsrA (222 aa).

Cysteine 60 is an active-site residue.

It belongs to the MsrA Met sulfoxide reductase family.

It carries out the reaction L-methionyl-[protein] + [thioredoxin]-disulfide + H2O = L-methionyl-(S)-S-oxide-[protein] + [thioredoxin]-dithiol. It catalyses the reaction [thioredoxin]-disulfide + L-methionine + H2O = L-methionine (S)-S-oxide + [thioredoxin]-dithiol. Its function is as follows. Has an important function as a repair enzyme for proteins that have been inactivated by oxidation. Catalyzes the reversible oxidation-reduction of methionine sulfoxide in proteins to methionine. The polypeptide is Peptide methionine sulfoxide reductase MsrA (Pseudomonas putida (strain W619)).